The following is a 256-amino-acid chain: uncharacterized protein (256 aa).

This is an uncharacterized protein from Pasteurella multocida (strain Pm70).